Consider the following 53-residue polypeptide: TGALLLDGNTLNYFGKIFLPDGLLDRYQAFELIHARKPEDFEKYQAFELIHAR.

Phe18 contributes to the chlorophyll b binding site. The chlorophyll a site is built by Glu48 and His51. Position 53 (Arg53) interacts with chlorophyll b.

This sequence belongs to the light-harvesting chlorophyll a/b-binding (LHC) protein family. The LHC complex consists of chlorophyll a-b binding proteins. It depends on Binds at least 14 chlorophylls (8 Chl-a and 6 Chl-b) and carotenoids such as lutein and neoxanthin. as a cofactor. In terms of processing, photoregulated by reversible phosphorylation of its threonine residues.

The protein localises to the plastid. The protein resides in the chloroplast thylakoid membrane. Functionally, the light-harvesting complex (LHC) functions as a light receptor, it captures and delivers excitation energy to photosystems with which it is closely associated. The protein is Chlorophyll a-b binding protein 1, chloroplastic of Populus euphratica (Euphrates poplar).